The sequence spans 146 residues: Flavodoxin (146 aa).

The region spanning 4 to 143 (SLIVYGSTTG…EIVSWGSGIA (140 aa)) is the Flavodoxin-like domain.

The protein belongs to the flavodoxin family. FMN is required as a cofactor.

Its function is as follows. Low-potential electron donor to a number of redox enzymes. This is Flavodoxin from Maridesulfovibrio salexigens (strain ATCC 14822 / DSM 2638 / NCIMB 8403 / VKM B-1763) (Desulfovibrio salexigens).